The chain runs to 1407 residues: DNA-directed RNA polymerase subunit beta' (1407 aa).

4 residues coordinate Zn(2+): Cys70, Cys72, Cys85, and Cys88. The Mg(2+) site is built by Asp460, Asp462, and Asp464. Residues Cys814, Cys888, Cys895, and Cys898 each contribute to the Zn(2+) site.

This sequence belongs to the RNA polymerase beta' chain family. As to quaternary structure, the RNAP catalytic core consists of 2 alpha, 1 beta, 1 beta' and 1 omega subunit. When a sigma factor is associated with the core the holoenzyme is formed, which can initiate transcription. It depends on Mg(2+) as a cofactor. The cofactor is Zn(2+).

The catalysed reaction is RNA(n) + a ribonucleoside 5'-triphosphate = RNA(n+1) + diphosphate. In terms of biological role, DNA-dependent RNA polymerase catalyzes the transcription of DNA into RNA using the four ribonucleoside triphosphates as substrates. This is DNA-directed RNA polymerase subunit beta' from Salmonella paratyphi B (strain ATCC BAA-1250 / SPB7).